The primary structure comprises 239 residues: Ribonuclease PH (239 aa).

Residues Arg86 and 124–126 (GTR) contribute to the phosphate site.

Belongs to the RNase PH family. Homohexameric ring arranged as a trimer of dimers.

It catalyses the reaction tRNA(n+1) + phosphate = tRNA(n) + a ribonucleoside 5'-diphosphate. Its function is as follows. Phosphorolytic 3'-5' exoribonuclease that plays an important role in tRNA 3'-end maturation. Removes nucleotide residues following the 3'-CCA terminus of tRNAs; can also add nucleotides to the ends of RNA molecules by using nucleoside diphosphates as substrates, but this may not be physiologically important. Probably plays a role in initiation of 16S rRNA degradation (leading to ribosome degradation) during starvation. This is Ribonuclease PH from Aromatoleum aromaticum (strain DSM 19018 / LMG 30748 / EbN1) (Azoarcus sp. (strain EbN1)).